The chain runs to 650 residues: Chaperone protein DnaK (650 aa).

T200 is subject to Phosphothreonine; by autocatalysis. Residues 612–636 (QQAGAAGAAGAAEGAAHAGGAQQAA) show a composition bias toward low complexity. The interval 612–650 (QQAGAAGAAGAAEGAAHAGGAQQAADDVVDAEFKEVKKD) is disordered.

It belongs to the heat shock protein 70 family.

Acts as a chaperone. The protein is Chaperone protein DnaK of Burkholderia ambifaria (strain ATCC BAA-244 / DSM 16087 / CCUG 44356 / LMG 19182 / AMMD) (Burkholderia cepacia (strain AMMD)).